We begin with the raw amino-acid sequence, 514 residues long: ATP synthase subunit alpha (514 aa).

Residue 170–177 (GDRQIGKT) coordinates ATP.

It belongs to the ATPase alpha/beta chains family. In terms of assembly, F-type ATPases have 2 components, CF(1) - the catalytic core - and CF(0) - the membrane proton channel. CF(1) has five subunits: alpha(3), beta(3), gamma(1), delta(1), epsilon(1). CF(0) has three main subunits: a(1), b(2) and c(9-12). The alpha and beta chains form an alternating ring which encloses part of the gamma chain. CF(1) is attached to CF(0) by a central stalk formed by the gamma and epsilon chains, while a peripheral stalk is formed by the delta and b chains.

It localises to the cell inner membrane. It carries out the reaction ATP + H2O + 4 H(+)(in) = ADP + phosphate + 5 H(+)(out). In terms of biological role, produces ATP from ADP in the presence of a proton gradient across the membrane. The alpha chain is a regulatory subunit. In Pseudomonas putida (strain GB-1), this protein is ATP synthase subunit alpha.